Here is a 396-residue protein sequence, read N- to C-terminus: Elongation factor Tu (396 aa).

One can recognise a tr-type G domain in the interval 11–205 (KPHVNIGTIG…IVDEYIPTPE (195 aa)). Residues 20 to 27 (GHVDHGKT) form a G1 region. 20–27 (GHVDHGKT) is a binding site for GTP. Thr-27 contacts Mg(2+). A G2 region spans residues 61–65 (GITIN). The segment at 82–85 (DAPG) is G3. Residues 82–86 (DAPGH) and 137–140 (NKCD) contribute to the GTP site. Residues 137–140 (NKCD) form a G4 region. Positions 175 to 177 (SAL) are G5.

It belongs to the TRAFAC class translation factor GTPase superfamily. Classic translation factor GTPase family. EF-Tu/EF-1A subfamily. As to quaternary structure, monomer.

The protein localises to the cytoplasm. The catalysed reaction is GTP + H2O = GDP + phosphate + H(+). GTP hydrolase that promotes the GTP-dependent binding of aminoacyl-tRNA to the A-site of ribosomes during protein biosynthesis. In Lactobacillus acidophilus (strain ATCC 700396 / NCK56 / N2 / NCFM), this protein is Elongation factor Tu.